The primary structure comprises 205 residues: Thiamine-phosphate synthase (205 aa).

Residues 37 to 41 and Asn69 contribute to the 4-amino-2-methyl-5-(diphosphooxymethyl)pyrimidine site; that span reads QVREK. Mg(2+)-binding residues include Asp70 and Asp89. Ser108 contacts 4-amino-2-methyl-5-(diphosphooxymethyl)pyrimidine. 134–136 contributes to the 2-[(2R,5Z)-2-carboxy-4-methylthiazol-5(2H)-ylidene]ethyl phosphate binding site; that stretch reads TGS. Lys137 lines the 4-amino-2-methyl-5-(diphosphooxymethyl)pyrimidine pocket. 2-[(2R,5Z)-2-carboxy-4-methylthiazol-5(2H)-ylidene]ethyl phosphate is bound by residues Gly165 and 185–186; that span reads IS.

The protein belongs to the thiamine-phosphate synthase family. It depends on Mg(2+) as a cofactor.

The catalysed reaction is 2-[(2R,5Z)-2-carboxy-4-methylthiazol-5(2H)-ylidene]ethyl phosphate + 4-amino-2-methyl-5-(diphosphooxymethyl)pyrimidine + 2 H(+) = thiamine phosphate + CO2 + diphosphate. The enzyme catalyses 2-(2-carboxy-4-methylthiazol-5-yl)ethyl phosphate + 4-amino-2-methyl-5-(diphosphooxymethyl)pyrimidine + 2 H(+) = thiamine phosphate + CO2 + diphosphate. It carries out the reaction 4-methyl-5-(2-phosphooxyethyl)-thiazole + 4-amino-2-methyl-5-(diphosphooxymethyl)pyrimidine + H(+) = thiamine phosphate + diphosphate. Its pathway is cofactor biosynthesis; thiamine diphosphate biosynthesis; thiamine phosphate from 4-amino-2-methyl-5-diphosphomethylpyrimidine and 4-methyl-5-(2-phosphoethyl)-thiazole: step 1/1. In terms of biological role, condenses 4-methyl-5-(beta-hydroxyethyl)thiazole monophosphate (THZ-P) and 2-methyl-4-amino-5-hydroxymethyl pyrimidine pyrophosphate (HMP-PP) to form thiamine monophosphate (TMP). The protein is Thiamine-phosphate synthase of Clostridium botulinum (strain Langeland / NCTC 10281 / Type F).